A 540-amino-acid chain; its full sequence is Coatomer subunit delta (540 aa).

Residues 169–263 (RHEEMLRGKR…GMILGGKSGT (95 aa)) are disordered. Residues 179–197 (SGGYTGISGGGGMGSGGMG) are compositionally biased toward gly residues. Residues 212–229 (NNNNNNNNNNNNNNNNNN) are compositionally biased toward low complexity. Positions 238-250 (SPNTSRPSAASSG) are enriched in polar residues. Gly residues predominate over residues 251 to 261 (SQGGMILGGKS). An MHD domain is found at 304-540 (QEGVHITVEE…TLSVDTYEIK (237 aa)).

This sequence belongs to the adaptor complexes medium subunit family. Delta-COP subfamily. Oligomeric complex that consists of at least the alpha, beta, beta', gamma, delta, epsilon and zeta subunits.

It is found in the cytoplasm. It localises to the golgi apparatus membrane. Its subcellular location is the cytoplasmic vesicle. The protein localises to the COPI-coated vesicle membrane. In terms of biological role, the coatomer is a cytosolic protein complex that binds to dilysine motifs and reversibly associates with Golgi non-clathrin-coated vesicles, which further mediate biosynthetic protein transport from the ER, via the Golgi up to the trans Golgi network. Coatomer complex is required for budding from Golgi membranes, and is essential for the retrograde Golgi-to-ER transport of dilysine-tagged proteins. This Dictyostelium discoideum (Social amoeba) protein is Coatomer subunit delta (copd).